A 540-amino-acid polypeptide reads, in one-letter code: Chaperonin GroEL 2 (540 aa).

Residues 29–32 (TLGP), 86–90 (DGTTT), G413, and D492 contribute to the ATP site. The disordered stretch occupies residues 521-540 (KPEKEKASVPGGGDMGGMDF). Positions 530 to 540 (PGGGDMGGMDF) are enriched in gly residues.

Belongs to the chaperonin (HSP60) family. Forms a cylinder of 14 subunits composed of two heptameric rings stacked back-to-back. Interacts with the co-chaperonin GroES.

The protein resides in the secreted. It is found in the capsule. The protein localises to the cell surface. Its subcellular location is the cell wall. It carries out the reaction ATP + H2O + a folded polypeptide = ADP + phosphate + an unfolded polypeptide.. Functionally, together with its co-chaperonin GroES, plays an essential role in assisting protein folding. The GroEL-GroES system forms a nano-cage that allows encapsulation of the non-native substrate proteins and provides a physical environment optimized to promote and accelerate protein folding. The polypeptide is Chaperonin GroEL 2 (Mycobacterium tuberculosis (strain ATCC 25177 / H37Ra)).